The sequence spans 706 residues: MQISLKWIKELIDIENVDLDDLIEKLTLGGFEVEEILELEINNEKQIALEISSTANRSDSLSIQGISVEIASLFNKQPKVCKYFNSSLNWQQKIKNLTTIRTSKTECLMFTAVILEGLEDLTVPKWIQNKLVSSGIMPLNNLVDFQNYILLETGYPFAFYDLDKVYSKVRTPTFSLSIEKAENGSEFFASNQINYKLDNSIFLVQANNIPISIAGIIENDEIICHSKTSSLLIEGSIFSASKIRQQSRKLAIRTDRSARYEKSLKSTYLIEALYRLISLLRISNPSLVYKFHSSNKVLEKVLKPIVLNYKTIVEILGPIKKRTNEHLIYISPETVTDYLKRLNFKFLFDSSTLNWEVTIPSIRSDDITREIDLIEEVGRLHGFNNFLTMLPQIKSVGRADFSYQTRKKITSYLLNMGLTELIHYSLVSNETFLKNEIKLVNPLLSDCSTLRVSLLPSLLMTIQENLKQGNSILEGFEYGHVFSGNIETTLTEIEYVGGIFGGTKIKSSWFEKGQSLKWFEAKGKIEKLFQQLNLGIHWRINSQTYTKKFLHPYRSAEIFLSSGKNIGVFGQLHPLLANKLGLSSEIYLFELNLELIQQSLQQNKLTIYSQYSVYPKIVKDLSFIIKKNIKFDELEKIIYANGTEFLSQINLLDDYKGEFIPEKHTSLCLQLTFQSNKKTLENKEIDRIVKNLKRVLELKVQAILRE.

In terms of domain architecture, B5 spans 300–388; sequence KVLKPIVLNY…RLHGFNNFLT (89 aa). Mg(2+) is bound by residues D366, D372, E375, and E376. The 94-residue stretch at 612 to 705 folds into the FDX-ACB domain; that stretch reads SVYPKIVKDL…LELKVQAILR (94 aa).

The protein belongs to the phenylalanyl-tRNA synthetase beta subunit family. Type 1 subfamily. In terms of assembly, tetramer of two alpha and two beta subunits. The cofactor is Mg(2+).

It localises to the plastid. The protein resides in the chloroplast. The enzyme catalyses tRNA(Phe) + L-phenylalanine + ATP = L-phenylalanyl-tRNA(Phe) + AMP + diphosphate + H(+). The sequence is that of Phenylalanine--tRNA ligase beta subunit, chloroplastic from Phaeodactylum tricornutum (strain CCAP 1055/1).